The following is a 100-amino-acid chain: Small ribosomal subunit protein uS14c (100 aa).

The protein belongs to the universal ribosomal protein uS14 family. As to quaternary structure, part of the 30S ribosomal subunit.

Its subcellular location is the plastid. It is found in the chloroplast. Binds 16S rRNA, required for the assembly of 30S particles. In Morus indica (Mulberry), this protein is Small ribosomal subunit protein uS14c.